Reading from the N-terminus, the 240-residue chain is tRNA (guanine-N(1)-)-methyltransferase (240 aa).

S-adenosyl-L-methionine contacts are provided by residues glycine 110 and 129–134; that span reads LGDFVL.

The protein belongs to the RNA methyltransferase TrmD family. In terms of assembly, homodimer.

The protein localises to the cytoplasm. It carries out the reaction guanosine(37) in tRNA + S-adenosyl-L-methionine = N(1)-methylguanosine(37) in tRNA + S-adenosyl-L-homocysteine + H(+). Functionally, specifically methylates guanosine-37 in various tRNAs. This chain is tRNA (guanine-N(1)-)-methyltransferase, found in Clostridium botulinum (strain 657 / Type Ba4).